A 638-amino-acid chain; its full sequence is 1,4-alpha-glucan branching enzyme GlgB (638 aa).

The active-site Nucleophile is the aspartate 303. Catalysis depends on glutamate 356, which acts as the Proton donor.

It belongs to the glycosyl hydrolase 13 family. GlgB subfamily. In terms of assembly, monomer.

It carries out the reaction Transfers a segment of a (1-&gt;4)-alpha-D-glucan chain to a primary hydroxy group in a similar glucan chain.. The protein operates within glycan biosynthesis; glycogen biosynthesis. Its function is as follows. Catalyzes the formation of the alpha-1,6-glucosidic linkages in glycogen by scission of a 1,4-alpha-linked oligosaccharide from growing alpha-1,4-glucan chains and the subsequent attachment of the oligosaccharide to the alpha-1,6 position. The chain is 1,4-alpha-glucan branching enzyme GlgB from Lactobacillus acidophilus (strain ATCC 700396 / NCK56 / N2 / NCFM).